The chain runs to 325 residues: uncharacterized protein (325 aa).

A disordered region spans residues 1–75 (MSQPPEHPGN…PPPGYPTHLQ (75 aa)). 2 stretches are compositionally biased toward pro residues: residues 24 to 39 (YPPP…PGYG) and 50 to 70 (YNAP…PPGY). 4 consecutive transmembrane segments (helical) span residues 96–116 (AVTL…VIGA), 153–173 (IVMF…HAGI), 205–225 (LLIV…GLIF), and 273–293 (LVGE…AALI).

The protein resides in the cell membrane. This is an uncharacterized protein from Mycobacterium tuberculosis (strain CDC 1551 / Oshkosh).